Here is a 525-residue protein sequence, read N- to C-terminus: Coronin-2A (525 aa).

WD repeat units follow at residues Gly80 to Asn120, Gly130 to Met170, Cys178 to Glu217, Tyr220 to Thr263, and Gly269 to Asn308. A coiled-coil region spans residues Gln485 to Arg524.

Belongs to the WD repeat coronin family. Binds actin. Component of the N-Cor repressor complex, at least composed of NCOR1, NCOR2, HDAC3, TBL1X, TBL1R, CORO2A and GPS2.

This is Coronin-2A (CORO2A) from Bos taurus (Bovine).